A 98-amino-acid chain; its full sequence is NADH-ubiquinone oxidoreductase chain 4L (98 aa).

3 consecutive transmembrane segments (helical) span residues 1 to 21 (MTMV…GLLM), 29 to 49 (SLLC…VTIL), and 61 to 81 (IILL…LVMV).

It belongs to the complex I subunit 4L family. In terms of assembly, core subunit of respiratory chain NADH dehydrogenase (Complex I) which is composed of 45 different subunits.

Its subcellular location is the mitochondrion inner membrane. It carries out the reaction a ubiquinone + NADH + 5 H(+)(in) = a ubiquinol + NAD(+) + 4 H(+)(out). Its function is as follows. Core subunit of the mitochondrial membrane respiratory chain NADH dehydrogenase (Complex I) which catalyzes electron transfer from NADH through the respiratory chain, using ubiquinone as an electron acceptor. Part of the enzyme membrane arm which is embedded in the lipid bilayer and involved in proton translocation. The protein is NADH-ubiquinone oxidoreductase chain 4L (MT-ND4L) of Leptonychotes weddellii (Weddell seal).